A 66-amino-acid polypeptide reads, in one-letter code: Large ribosomal subunit protein uL29 (66 aa).

Belongs to the universal ribosomal protein uL29 family.

The protein is Large ribosomal subunit protein uL29 of Borrelia recurrentis (strain A1).